Here is a 349-residue protein sequence, read N- to C-terminus: UDP-3-O-acylglucosamine N-acyltransferase (349 aa).

The active-site Proton acceptor is the His-248.

This sequence belongs to the transferase hexapeptide repeat family. LpxD subfamily. In terms of assembly, homotrimer.

It carries out the reaction a UDP-3-O-[(3R)-3-hydroxyacyl]-alpha-D-glucosamine + a (3R)-hydroxyacyl-[ACP] = a UDP-2-N,3-O-bis[(3R)-3-hydroxyacyl]-alpha-D-glucosamine + holo-[ACP] + H(+). The protein operates within bacterial outer membrane biogenesis; LPS lipid A biosynthesis. Its function is as follows. Catalyzes the N-acylation of UDP-3-O-acylglucosamine using 3-hydroxyacyl-ACP as the acyl donor. Is involved in the biosynthesis of lipid A, a phosphorylated glycolipid that anchors the lipopolysaccharide to the outer membrane of the cell. The chain is UDP-3-O-acylglucosamine N-acyltransferase from Colwellia psychrerythraea (strain 34H / ATCC BAA-681) (Vibrio psychroerythus).